The primary structure comprises 252 residues: MRAKKRFGQNFLIDQNIINKIVDSSEVENRNIIEIGPGKGALTKILVKKANKVLAYEIDQDMVNILNQQISSKNFVLINKDFLKEEFDKSQNYNIVANIPYYITSDIIFKIIENHQIFDQATLMVQKEVALRILAKQNDSEFSKLSLSVQFFFDVFLICDVSKNSFRPIPKVDSAVIKLVKKKNKDFSLWKEYFEFLKIAFSSRRKTLLNNLKYFFNEQKILKFFELKNYDPKVRAQNIKNEDFYALFLELR.

The S-adenosyl-L-methionine site is built by Asn10, Leu12, Gly36, Glu57, Asp81, and Asn98.

Belongs to the class I-like SAM-binding methyltransferase superfamily. rRNA adenine N(6)-methyltransferase family. RsmA subfamily.

Its subcellular location is the cytoplasm. It catalyses the reaction adenosine(1518)/adenosine(1519) in 16S rRNA + 4 S-adenosyl-L-methionine = N(6)-dimethyladenosine(1518)/N(6)-dimethyladenosine(1519) in 16S rRNA + 4 S-adenosyl-L-homocysteine + 4 H(+). Its function is as follows. Specifically dimethylates two adjacent adenosines (A1518 and A1519) in the loop of a conserved hairpin near the 3'-end of 16S rRNA in the 30S particle. May play a critical role in biogenesis of 30S subunits. The protein is Ribosomal RNA small subunit methyltransferase A of Mycoplasmopsis pulmonis (strain UAB CTIP) (Mycoplasma pulmonis).